We begin with the raw amino-acid sequence, 717 residues long: Ribosomal RNA large subunit methyltransferase K/L (717 aa).

In terms of domain architecture, THUMP spans 44–155 (DAYKVCIYSY…KQFVNVFLCL (112 aa)).

The protein belongs to the methyltransferase superfamily. RlmKL family.

The protein localises to the cytoplasm. It carries out the reaction guanosine(2445) in 23S rRNA + S-adenosyl-L-methionine = N(2)-methylguanosine(2445) in 23S rRNA + S-adenosyl-L-homocysteine + H(+). The enzyme catalyses guanosine(2069) in 23S rRNA + S-adenosyl-L-methionine = N(2)-methylguanosine(2069) in 23S rRNA + S-adenosyl-L-homocysteine + H(+). Its function is as follows. Specifically methylates the guanine in position 2445 (m2G2445) and the guanine in position 2069 (m7G2069) of 23S rRNA. This Francisella tularensis subsp. holarctica (strain FTNF002-00 / FTA) protein is Ribosomal RNA large subunit methyltransferase K/L.